Consider the following 499-residue polypeptide: Tektin-like protein 1 (499 aa).

S14 bears the Phosphoserine mark. Residues 201–225 (WEKKELKSMKRKMEKDMEISEDLLK) adopt a coiled-coil conformation. The segment at 265 to 286 (VDITRPPTPRTQGLKTPPPDPI) is disordered. Positions 308-328 (KDILTEMAKNEVDIQNQQQEI) form a coiled coil. Y372 bears the Phosphotyrosine mark.

As to quaternary structure, microtubule inner protein component of sperm flagellar doublet microtubules.

It is found in the cytoplasm. The protein resides in the cytoskeleton. It localises to the flagellum axoneme. In terms of biological role, microtubule inner protein (MIP) part of the dynein-decorated doublet microtubules (DMTs) in sperm flagellar axoneme, which is required for motile flagellum beating. Forms an extensive interaction network cross-linking the lumen of axonemal doublet microtubules. This chain is Tektin-like protein 1, found in Mus musculus (Mouse).